The following is a 591-amino-acid chain: L-fucose isomerase (591 aa).

Active-site proton acceptor residues include E337 and D361. Mn(2+)-binding residues include E337, D361, and H528.

This sequence belongs to the L-fucose isomerase family. In terms of assembly, homohexamer. Mn(2+) serves as cofactor.

The protein resides in the cytoplasm. The enzyme catalyses L-fucose = L-fuculose. It functions in the pathway carbohydrate degradation; L-fucose degradation; L-lactaldehyde and glycerone phosphate from L-fucose: step 1/3. Its function is as follows. Converts the aldose L-fucose into the corresponding ketose L-fuculose. In Salmonella arizonae (strain ATCC BAA-731 / CDC346-86 / RSK2980), this protein is L-fucose isomerase.